Here is a 232-residue protein sequence, read N- to C-terminus: 5'-methylthioadenosine/S-adenosylhomocysteine nucleosidase (232 aa).

The active-site Proton acceptor is Glu-12. Residues Gly-78, Val-152, and 173–174 (ME) contribute to the substrate site. Asp-197 serves as the catalytic Proton donor.

This sequence belongs to the PNP/UDP phosphorylase family. MtnN subfamily. As to quaternary structure, homodimer.

It catalyses the reaction S-adenosyl-L-homocysteine + H2O = S-(5-deoxy-D-ribos-5-yl)-L-homocysteine + adenine. The enzyme catalyses S-methyl-5'-thioadenosine + H2O = 5-(methylsulfanyl)-D-ribose + adenine. It carries out the reaction 5'-deoxyadenosine + H2O = 5-deoxy-D-ribose + adenine. It functions in the pathway amino-acid biosynthesis; L-methionine biosynthesis via salvage pathway; S-methyl-5-thio-alpha-D-ribose 1-phosphate from S-methyl-5'-thioadenosine (hydrolase route): step 1/2. Catalyzes the irreversible cleavage of the glycosidic bond in both 5'-methylthioadenosine (MTA) and S-adenosylhomocysteine (SAH/AdoHcy) to adenine and the corresponding thioribose, 5'-methylthioribose and S-ribosylhomocysteine, respectively. Also cleaves 5'-deoxyadenosine, a toxic by-product of radical S-adenosylmethionine (SAM) enzymes, into 5-deoxyribose and adenine. Thus, is required for in vivo function of the radical SAM enzymes biotin synthase and lipoic acid synthase, that are inhibited by 5'-deoxyadenosine accumulation. The polypeptide is 5'-methylthioadenosine/S-adenosylhomocysteine nucleosidase (Buchnera aphidicola subsp. Acyrthosiphon pisum (strain 5A)).